Reading from the N-terminus, the 831-residue chain is Intraflagellar transport protein 88 (831 aa).

11 TPR repeats span residues 68–101 (IFKL…EQKV), 120–153 (TCIW…AEGA), 156–189 (AQIR…ASPS), 248–281 (FDPL…SILI), 492–525 (RGVH…DPYD), 526–559 (SFAH…NMES), 560–593 (VQAT…LPSY), 595–627 (DAIY…FSAV), 632–665 (PSIY…VPFS), 666–699 (LAVI…DTTT), and 700–733 (PKWS…FPTN). The segment at 785 to 816 (RRNSVAAVGPGSRAGQDRFEASNNRVSSNTGD) is disordered. A compositionally biased stretch (polar residues) spans 805–815 (ASNNRVSSNTG).

The protein resides in the cell projection. Its subcellular location is the cilium. The protein localises to the flagellum. It localises to the cytoplasm. It is found in the cytoskeleton. The protein resides in the flagellum axoneme. Its subcellular location is the flagellum basal body. Functionally, component of the intraflagellar transport complex B (IFT-B) involved in flagellar assembly. In Giardia intestinalis (strain ATCC 50803 / WB clone C6) (Giardia lamblia), this protein is Intraflagellar transport protein 88.